Here is a 316-residue protein sequence, read N- to C-terminus: Probable 5-dehydro-4-deoxyglucarate dehydratase (316 aa).

This sequence belongs to the DapA family.

It carries out the reaction 5-dehydro-4-deoxy-D-glucarate + H(+) = 2,5-dioxopentanoate + CO2 + H2O. Its pathway is carbohydrate acid metabolism; D-glucarate degradation; 2,5-dioxopentanoate from D-glucarate: step 2/2. The sequence is that of Probable 5-dehydro-4-deoxyglucarate dehydratase from Corynebacterium glutamicum (strain R).